A 211-amino-acid polypeptide reads, in one-letter code: MRLLDSKGVHAVFEQLHAANPQPQGELHWRNTFTLLVAVLLSAQATDKSVNKATAALFDVADTPQAMLALGEERLCSYIRTINLYPTKARRIIALSAELIERFAAQVPCDAHALESLPGVGHKTANVVLNMGFGIPTIAVDTHILRTAPRIGLSSGRTPRAVERDLLVVTPREFRMHAHHWILLHGRYTCTARRPRCTECCLRDLCCKNNI.

In terms of domain architecture, HhH spans 111–130 (AHALESLPGVGHKTANVVLN). [4Fe-4S] cluster is bound by residues Cys-190, Cys-197, Cys-200, and Cys-206.

It belongs to the Nth/MutY family. It depends on [4Fe-4S] cluster as a cofactor.

It catalyses the reaction 2'-deoxyribonucleotide-(2'-deoxyribose 5'-phosphate)-2'-deoxyribonucleotide-DNA = a 3'-end 2'-deoxyribonucleotide-(2,3-dehydro-2,3-deoxyribose 5'-phosphate)-DNA + a 5'-end 5'-phospho-2'-deoxyribonucleoside-DNA + H(+). DNA repair enzyme that has both DNA N-glycosylase activity and AP-lyase activity. The DNA N-glycosylase activity releases various damaged pyrimidines from DNA by cleaving the N-glycosidic bond, leaving an AP (apurinic/apyrimidinic) site. The AP-lyase activity cleaves the phosphodiester bond 3' to the AP site by a beta-elimination, leaving a 3'-terminal unsaturated sugar and a product with a terminal 5'-phosphate. The chain is Endonuclease III from Treponema pallidum (strain Nichols).